We begin with the raw amino-acid sequence, 329 residues long: Malate dehydrogenase (329 aa).

Glycine 12–glycine 18 provides a ligand contact to NAD(+). Residues arginine 93 and arginine 99 each coordinate substrate. NAD(+) contacts are provided by residues asparagine 106, glutamine 113, and threonine 130–asparagine 132. 2 residues coordinate substrate: asparagine 132 and arginine 163. Histidine 188 serves as the catalytic Proton acceptor.

The protein belongs to the LDH/MDH superfamily. MDH type 2 family.

The catalysed reaction is (S)-malate + NAD(+) = oxaloacetate + NADH + H(+). Catalyzes the reversible oxidation of malate to oxaloacetate. The polypeptide is Malate dehydrogenase (Mycobacterium avium (strain 104)).